The sequence spans 383 residues: tRNA-specific 2-thiouridylase MnmA (383 aa).

Residues 9-16 (GMSGGVDS) and Met35 each bind ATP. The interval 95-97 (NPD) is interaction with target base in tRNA. Cys100 acts as the Nucleophile in catalysis. A disulfide bridge connects residues Cys100 and Cys196. Gly124 contacts ATP. An interaction with tRNA region spans residues 146-148 (KDQ). Cys196 serves as the catalytic Cysteine persulfide intermediate. Residues 308–309 (RY) are interaction with tRNA.

The protein belongs to the MnmA/TRMU family.

Its subcellular location is the cytoplasm. It catalyses the reaction S-sulfanyl-L-cysteinyl-[protein] + uridine(34) in tRNA + AH2 + ATP = 2-thiouridine(34) in tRNA + L-cysteinyl-[protein] + A + AMP + diphosphate + H(+). Catalyzes the 2-thiolation of uridine at the wobble position (U34) of tRNA, leading to the formation of s(2)U34. This Burkholderia mallei (strain NCTC 10247) protein is tRNA-specific 2-thiouridylase MnmA.